The chain runs to 559 residues: WD repeat-containing protein JIP5 (559 aa).

WD repeat units follow at residues 26–67 (QYSD…NYLQ), 77–116 (ADGK…WKTK), 117–156 (RHKG…VVKK), 162–201 (DNGG…ETNR), 207–247 (NGDD…ESDF), 265–306 (DQED…LEDQ), 313–347 (AKEE…DIKK), 354–394 (RNHS…SEEE), and 428–470 (DSDG…SDDE). Disordered stretches follow at residues 386 to 500 (SRNE…LIGL) and 515 to 559 (EESE…FEGL). Over residues 391–417 (SEEEDDEESESFSDSDSDSDSDSDSDS) the composition is skewed to acidic residues. Residues 418–428 (DSDRDRDRDSD) are compositionally biased toward basic and acidic residues. Positions 482–494 (DMDDIDEGSDSSE) are enriched in acidic residues. Positions 520-534 (EGEKLQKKRKNEPSK) are enriched in basic and acidic residues. The span at 535-544 (KNTKNLKKVK) shows a compositional bias: basic residues.

It belongs to the WD repeat WDR55 family.

It is found in the nucleus. The protein localises to the nucleolus. The sequence is that of WD repeat-containing protein JIP5 (JIP5) from Vanderwaltozyma polyspora (strain ATCC 22028 / DSM 70294 / BCRC 21397 / CBS 2163 / NBRC 10782 / NRRL Y-8283 / UCD 57-17) (Kluyveromyces polysporus).